The chain runs to 562 residues: Nucleoprotein (562 aa).

Residues 54-237 (LRKTKRTDGD…ITKDESAINI (184 aa)) form a binding site for the cap structure m7GTP region. Residues aspartate 381 and glutamate 383 each coordinate Mn(2+). Zn(2+) is bound by residues glutamate 391, cysteine 498, histidine 501, and cysteine 523. A Mn(2+)-binding site is contributed by aspartate 527.

This sequence belongs to the arenaviridae nucleocapsid protein family. Homomultimerizes to form the nucleocapsid. Binds to viral genomic RNA. Interacts with glycoprotein G2. Interacts with protein Z; this interaction probably directs the encapsidated genome to budding sites. Interacts with protein L; this interaction does not interfere with Z-L interaction. Interacts with host IKBKE (via Protein kinase domain); the interaction inhibits IKBKE kinase activity.

The protein localises to the virion. It is found in the host cytoplasm. Encapsidates the genome, protecting it from nucleases. The encapsidated genomic RNA is termed the nucleocapsid (NC). Serves as template for viral transcription and replication. The increased presence of protein N in host cell does not seem to trigger the switch from transcription to replication as observed in other negative strain RNA viruses. Through the interaction with host IKBKE, strongly inhibits the phosphorylation and nuclear translocation of host IRF3, a protein involved in interferon activation pathway, leading to the inhibition of interferon-beta and IRF3-dependent promoters activation. Also encodes a functional 3'-5' exoribonuclease that degrades preferentially dsRNA substrates and thereby participates in the suppression of interferon induction. This chain is Nucleoprotein, found in Homo sapiens (Human).